A 202-amino-acid polypeptide reads, in one-letter code: ATP-dependent Clp protease proteolytic subunit (202 aa).

The active-site Nucleophile is Ser107. The active site involves His132.

The protein belongs to the peptidase S14 family. Fourteen ClpP subunits assemble into 2 heptameric rings which stack back to back to give a disk-like structure with a central cavity, resembling the structure of eukaryotic proteasomes.

The protein resides in the cytoplasm. It carries out the reaction Hydrolysis of proteins to small peptides in the presence of ATP and magnesium. alpha-casein is the usual test substrate. In the absence of ATP, only oligopeptides shorter than five residues are hydrolyzed (such as succinyl-Leu-Tyr-|-NHMec, and Leu-Tyr-Leu-|-Tyr-Trp, in which cleavage of the -Tyr-|-Leu- and -Tyr-|-Trp bonds also occurs).. Its function is as follows. Cleaves peptides in various proteins in a process that requires ATP hydrolysis. Has a chymotrypsin-like activity. Plays a major role in the degradation of misfolded proteins. In Shewanella amazonensis (strain ATCC BAA-1098 / SB2B), this protein is ATP-dependent Clp protease proteolytic subunit.